We begin with the raw amino-acid sequence, 316 residues long: Acetaldehyde dehydrogenase (316 aa).

Position 11–14 (11–14) interacts with NAD(+); the sequence is SGNI. Catalysis depends on C131, which acts as the Acyl-thioester intermediate. Residues 162-170 and N289 each bind NAD(+); that span reads SAGPGTRAN.

Belongs to the acetaldehyde dehydrogenase family. Interacts with MhpE.

The catalysed reaction is acetaldehyde + NAD(+) + CoA = acetyl-CoA + NADH + H(+). It functions in the pathway aromatic compound metabolism; 3-phenylpropanoate degradation. Its function is as follows. Catalyzes the conversion of acetaldehyde to acetyl-CoA, using NAD(+) and coenzyme A. Is the final enzyme in the meta-cleavage pathway for the degradation of aromatic compounds. In Escherichia coli O157:H7, this protein is Acetaldehyde dehydrogenase.